We begin with the raw amino-acid sequence, 115 residues long: Envelope glycoprotein N (115 aa).

Residues 1–27 (MWLLRPAGSNFIVALIVLACAGPLTCS) form the signal peptide. Topologically, residues 28 to 77 (AQLDAGILNPWGSAGHNDAVMPGMFANSESDERFYSPHCSSRGLPLVNES) are virion surface. The chain crosses the membrane as a helical span at residues 78-98 (MASVIFFLSLAMVCVAIVAIL). Residues 99 to 115 (YNCCFNSFKNSVINSRW) are Intravirion-facing.

This sequence belongs to the herpesviridae glycoprotein N family. As to quaternary structure, interacts (via N-terminus) with gM (via N-terminus). The gM-gN heterodimer forms the gCII complex.

Its subcellular location is the virion membrane. The protein localises to the host membrane. It localises to the host Golgi apparatus. The protein resides in the host trans-Golgi network. Functionally, envelope glycoprotein necessary for proper maturation of gM and modulation of its membrane fusion activity. Also plays a critical role in virion morphogenesis. The polypeptide is Envelope glycoprotein N (Psittacid herpesvirus 1 (isolate Amazon parrot/-/97-0001/1997) (PsHV-1)).